The following is a 68-amino-acid chain: Cell division protein ZapB (68 aa).

A coiled-coil region spans residues 3–58 (LELLSKLETKIQAALETIELLKMELEEEKQKNHTLNEQNQQLSQDLTSWNEKVTGL).

The protein belongs to the ZapB family. Homodimer. The ends of the coiled-coil dimer bind to each other, forming polymers. Interacts with FtsZ.

Its subcellular location is the cytoplasm. In terms of biological role, non-essential, abundant cell division factor that is required for proper Z-ring formation. It is recruited early to the divisome by direct interaction with FtsZ, stimulating Z-ring assembly and thereby promoting cell division earlier in the cell cycle. Its recruitment to the Z-ring requires functional FtsA or ZipA. The sequence is that of Cell division protein ZapB from Shewanella loihica (strain ATCC BAA-1088 / PV-4).